Reading from the N-terminus, the 391-residue chain is Putative 1-acyl-sn-glycerol-3-phosphate acyltransferase acl-12 (391 aa).

The next 2 helical transmembrane spans lie at phenylalanine 47–phenylalanine 67 and leucine 84–threonine 104. The short motif at histidine 124–aspartate 129 is the HXXXXD motif element.

This sequence belongs to the 1-acyl-sn-glycerol-3-phosphate acyltransferase family.

Its subcellular location is the membrane. It catalyses the reaction a 1-acyl-sn-glycero-3-phosphate + an acyl-CoA = a 1,2-diacyl-sn-glycero-3-phosphate + CoA. Its pathway is phospholipid metabolism; CDP-diacylglycerol biosynthesis; CDP-diacylglycerol from sn-glycerol 3-phosphate: step 2/3. Its function is as follows. Converts lysophosphatidic acid (LPA) into phosphatidic acid by incorporating an acyl moiety at the sn-2 position of the glycerol backbone. In Caenorhabditis elegans, this protein is Putative 1-acyl-sn-glycerol-3-phosphate acyltransferase acl-12 (acl-12).